A 313-amino-acid chain; its full sequence is Porphobilinogen deaminase (313 aa).

The residue at position 242 (Cys242) is an S-(dipyrrolylmethanemethyl)cysteine.

This sequence belongs to the HMBS family. In terms of assembly, monomer. Dipyrromethane serves as cofactor.

The catalysed reaction is 4 porphobilinogen + H2O = hydroxymethylbilane + 4 NH4(+). Its pathway is porphyrin-containing compound metabolism; protoporphyrin-IX biosynthesis; coproporphyrinogen-III from 5-aminolevulinate: step 2/4. Its function is as follows. Tetrapolymerization of the monopyrrole PBG into the hydroxymethylbilane pre-uroporphyrinogen in several discrete steps. This is Porphobilinogen deaminase from Marinobacter nauticus (strain ATCC 700491 / DSM 11845 / VT8) (Marinobacter aquaeolei).